A 158-amino-acid chain; its full sequence is MSSAIERKSLDPADEPVDEVLQIPPSLLTCGGCQQSIGDRYFLKAIDQYWHEDCLSCDLCGCRLGEVGRRLYYKLGRKLCRRDYLRLFGQDGLCASCDNRIRAYEMTMRVKDKVYHLECFKCAACQKHFCVGDRYLLINSDIVCEQDIYEWTKLSEMM.

2 LIM zinc-binding domains span residues 28–90 (LTCG…LFGQ) and 92–154 (GLCA…WTKL).

Expression becomes restricted to the ventral blood island (VBI) as the embryo develops. In late neurula and early tailbud embryos, also expressed in the dorsal lateral plate (DLP), the site of definitive hematopoiesis in the tadpole. Expression in the DLP diminishes during tailbud stages. Expressed in circulating blood cells of tadpoles. Also expressed in non-hematopoietic sites, including the tailbud region and the central nervous system of early neurula embryos.

Its subcellular location is the nucleus. Functionally, transcription factor that acts synergistically with tal1/scl and gata1 to specify embryonic dorsal mesoderm to a hematopoietic fate. Induces globin gene expression together with fgf. This chain is Rhombotin-2, found in Xenopus laevis (African clawed frog).